The primary structure comprises 154 residues: Urease accessory protein UreE (154 aa).

The segment at 135 to 154 is disordered; sequence YGHGRTFGHDHGHAHDHHHA.

It belongs to the UreE family.

It is found in the cytoplasm. Involved in urease metallocenter assembly. Binds nickel. Probably functions as a nickel donor during metallocenter assembly. This Paracoccus denitrificans (strain Pd 1222) protein is Urease accessory protein UreE.